The chain runs to 365 residues: Chorismate synthase (365 aa).

Position 46 (R46) interacts with NADP(+). FMN-binding positions include R123–S125, N241–G242, G281, K296–S300, and R322.

The protein belongs to the chorismate synthase family. In terms of assembly, homotetramer. FMNH2 is required as a cofactor.

The enzyme catalyses 5-O-(1-carboxyvinyl)-3-phosphoshikimate = chorismate + phosphate. The protein operates within metabolic intermediate biosynthesis; chorismate biosynthesis; chorismate from D-erythrose 4-phosphate and phosphoenolpyruvate: step 7/7. Catalyzes the anti-1,4-elimination of the C-3 phosphate and the C-6 proR hydrogen from 5-enolpyruvylshikimate-3-phosphate (EPSP) to yield chorismate, which is the branch point compound that serves as the starting substrate for the three terminal pathways of aromatic amino acid biosynthesis. This reaction introduces a second double bond into the aromatic ring system. This is Chorismate synthase from Helicobacter pylori (strain HPAG1).